A 1891-amino-acid chain; its full sequence is Endoribonuclease Dicer-L (1891 aa).

Residues 41 to 217 form the Helicase ATP-binding domain; that stretch reads LLEAALDHNT…DLEEKIQKLE (177 aa). 54 to 61 contacts ATP; the sequence is LNSGSGKT. The DECH box motif lies at 165 to 168; sequence DECH. Positions 425-594 constitute a Helicase C-terminal domain; the sequence is SFPSPFTNIL…SIDCGNTESE (170 aa). A Dicer dsRNA-binding fold domain is found at 622–714; sequence AIGHINRYCA…MPVGKETVKY (93 aa). Residues 887 to 1034 form the PAZ domain; the sequence is KFVEDIEKSE…LVPELCAIHP (148 aa). RNase III domains follow at residues 1248–1379 and 1635–1793; these read TSDM…ETSG and FENF…MDSG. Mg(2+) contacts are provided by Glu1292, Asp1370, Glu1373, Glu1674, Asp1779, and Glu1782. A DRBM domain is found at 1818 to 1883; the sequence is VPRSPVRELL…ARRALRSLKA (66 aa).

This sequence belongs to the helicase family. Dicer subfamily. In terms of assembly, component of the RISC loading complex (RLC), or micro-RNA (miRNA) loading complex (miRLC), which is composed of dicer1, ago2 and tarbp2; dicer1 and tarbp2 are required to process precursor miRNAs (pre-miRNAs) to mature miRNAs and then load them onto ago2. Note that the trimeric RLC/miRLC is also referred to as RISC. Mg(2+) is required as a cofactor. The cofactor is Mn(2+).

Its subcellular location is the cytoplasm. The enzyme catalyses Endonucleolytic cleavage to 5'-phosphomonoester.. Double-stranded RNA (dsRNA) endoribonuclease playing a central role in short dsRNA-mediated post-transcriptional gene silencing. Cleaves naturally occurring long dsRNAs and short hairpin pre-microRNAs (miRNA) into fragments of 21 to 23 nucleotides with 3' overhang of two nucleotides, producing respectively short interfering RNAs (siRNA) and mature microRNAs. SiRNAs and miRNAs serve as guide to direct the RNA-induced silencing complex (RISC) to complementary RNAs to degrade them or prevent their translation. Gene silencing mediated by siRNAs, also called RNA interference, controls the elimination of transcripts from mobile and repetitive DNA elements of the genome but also the degradation of exogenous RNA of viral origin for instance. The miRNA pathway on the other side is a mean to specifically regulate the expression of target genes. During embryonic development, at the left-right organizer, post-transcriptionally regulates the expression of dand5 in flow sensor cells. In post-flow stages, acts along with Bicc1 to repress dand5 mRNA translation and decay. Decreased Dand5 expression lifts repression of Nodal and defines leftness by induction of the lateral plate mesoderm Nodal signaling cascade. The protein is Endoribonuclease Dicer-L (dicer1.L) of Xenopus laevis (African clawed frog).